A 291-amino-acid chain; its full sequence is N-acetylmannosamine kinase (291 aa).

ATP is bound by residues A5 to K12 and G132 to S139. Zn(2+) contacts are provided by H156, C166, C168, and C173.

The protein belongs to the ROK (NagC/XylR) family. NanK subfamily. In terms of assembly, homodimer.

It catalyses the reaction an N-acyl-D-mannosamine + ATP = an N-acyl-D-mannosamine 6-phosphate + ADP + H(+). It participates in amino-sugar metabolism; N-acetylneuraminate degradation; D-fructose 6-phosphate from N-acetylneuraminate: step 2/5. In terms of biological role, catalyzes the phosphorylation of N-acetylmannosamine (ManNAc) to ManNAc-6-P. The sequence is that of N-acetylmannosamine kinase from Escherichia fergusonii (strain ATCC 35469 / DSM 13698 / CCUG 18766 / IAM 14443 / JCM 21226 / LMG 7866 / NBRC 102419 / NCTC 12128 / CDC 0568-73).